The primary structure comprises 127 residues: Fluoride-specific ion channel FluC (127 aa).

4 helical membrane passes run F4–V24, Y38–F58, V71–V91, and L104–L124. Na(+) is bound by residues G78 and T81.

Belongs to the fluoride channel Fluc/FEX (TC 1.A.43) family.

It is found in the cell inner membrane. It carries out the reaction fluoride(in) = fluoride(out). With respect to regulation, na(+) is not transported, but it plays an essential structural role and its presence is essential for fluoride channel function. Functionally, fluoride-specific ion channel. Important for reducing fluoride concentration in the cell, thus reducing its toxicity. The protein is Fluoride-specific ion channel FluC of Vibrio parahaemolyticus serotype O3:K6 (strain RIMD 2210633).